We begin with the raw amino-acid sequence, 394 residues long: Phosphopentomutase (394 aa).

Positions 14, 287, 292, 328, 329, and 340 each coordinate Mn(2+).

The protein belongs to the phosphopentomutase family. It depends on Mn(2+) as a cofactor.

Its subcellular location is the cytoplasm. The enzyme catalyses 2-deoxy-alpha-D-ribose 1-phosphate = 2-deoxy-D-ribose 5-phosphate. The catalysed reaction is alpha-D-ribose 1-phosphate = D-ribose 5-phosphate. Its pathway is carbohydrate degradation; 2-deoxy-D-ribose 1-phosphate degradation; D-glyceraldehyde 3-phosphate and acetaldehyde from 2-deoxy-alpha-D-ribose 1-phosphate: step 1/2. Functionally, isomerase that catalyzes the conversion of deoxy-ribose 1-phosphate (dRib-1-P) and ribose 1-phosphate (Rib-1-P) to deoxy-ribose 5-phosphate (dRib-5-P) and ribose 5-phosphate (Rib-5-P), respectively. This is Phosphopentomutase from Listeria monocytogenes serovar 1/2a (strain ATCC BAA-679 / EGD-e).